Reading from the N-terminus, the 517-residue chain is Pseudaminic acid cytidylyltransferase and UDP-2,4-diacetamido-2,4,6-trideoxy-beta-L-altropyranose hydrolase (517 aa).

Positions 1–208 (MRAIAIVLAR…ELSPLEVQDI (208 aa)) are pseudaminic acid cytidylyltransferase. The segment at 209–517 (AHFRRFRISQ…EGALREFLEI (309 aa)) is UDP-2,4-diacetamido-2,4,6-trideoxy-beta-L-altropyranose hydrolase. Histidine 244 acts as the Proton acceptor; for UDP-2,4-diacetamido-2,4,6-trideoxy-beta-L-altropyranose hydrolase activity in catalysis.

It in the N-terminal section; belongs to the CMP-NeuNAc synthase family. In the C-terminal section; belongs to the PseG family. As to quaternary structure, monomer. The cofactor is Mg(2+).

It carries out the reaction UDP-2,4-diacetamido-2,4,6-trideoxy-beta-L-altrose + H2O = 2,4-diacetamido-2,4,6-trideoxy-beta-L-altrose + UDP + H(+). It catalyses the reaction pseudaminate + CTP = CMP-pseudaminate + diphosphate. Functionally, catalyzes the fourth and sixth steps in the biosynthesis of pseudaminic acid, a sialic-acid-like sugar that is used to modify flagellin. The C-terminus mediates the fourth step of the pathway and catalyzes the removal of UDP from C-1 of UDP-2,4-diacetamido-2,4,6-trideoxy-beta-L-altropyranose forming 2,4-diacetamido-2,4,6-trideoxy-beta-L-altropyranose. The N-terminal part mediates the last step of the pathway by mediating activation of pseudaminic acid with CMP by forming CMP-pseudaminic acid. The chain is Pseudaminic acid cytidylyltransferase and UDP-2,4-diacetamido-2,4,6-trideoxy-beta-L-altropyranose hydrolase from Helicobacter pylori (strain ATCC 700392 / 26695) (Campylobacter pylori).